A 429-amino-acid chain; its full sequence is Histidinol dehydrogenase (429 aa).

The NAD(+) site is built by Tyr-131, Gln-193, and Asn-216. Residues Ser-239, Gln-261, and His-264 each coordinate substrate. Gln-261 and His-264 together coordinate Zn(2+). Residues Glu-327 and His-328 each act as proton acceptor in the active site. Residues His-328, Asp-361, Glu-415, and His-420 each coordinate substrate. Asp-361 contributes to the Zn(2+) binding site. Residue His-420 participates in Zn(2+) binding.

Belongs to the histidinol dehydrogenase family. Zn(2+) is required as a cofactor.

It catalyses the reaction L-histidinol + 2 NAD(+) + H2O = L-histidine + 2 NADH + 3 H(+). It participates in amino-acid biosynthesis; L-histidine biosynthesis; L-histidine from 5-phospho-alpha-D-ribose 1-diphosphate: step 9/9. Functionally, catalyzes the sequential NAD-dependent oxidations of L-histidinol to L-histidinaldehyde and then to L-histidine. The protein is Histidinol dehydrogenase (hisD) of Methanocaldococcus jannaschii (strain ATCC 43067 / DSM 2661 / JAL-1 / JCM 10045 / NBRC 100440) (Methanococcus jannaschii).